The chain runs to 590 residues: Arginine--tRNA ligase (590 aa).

A 'HIGH' region motif is present at residues Ala130 to His140.

Belongs to the class-I aminoacyl-tRNA synthetase family. Monomer.

It is found in the cytoplasm. It catalyses the reaction tRNA(Arg) + L-arginine + ATP = L-arginyl-tRNA(Arg) + AMP + diphosphate. In Methylobacterium nodulans (strain LMG 21967 / CNCM I-2342 / ORS 2060), this protein is Arginine--tRNA ligase.